Here is a 327-residue protein sequence, read N- to C-terminus: rRNA 2'-O-methyltransferase fibrillarin (327 aa).

The interval 1-95 is disordered; the sequence is MKPGFSPRGG…NQSGKNVMVE (95 aa). Residues 7-80 show a composition bias toward gly residues; sequence PRGGGFGGRG…GGNRGRGGGR (74 aa). Residues Arg-8, Arg-15, Arg-21, Arg-24, Arg-28, and Arg-31 each carry the asymmetric dimethylarginine modification. Glycyl lysine isopeptide (Lys-Gly) (interchain with G-Cter in SUMO2) cross-links involve residues Lys-90, Lys-108, and Lys-115. Lys-108 is subject to N6-acetyllysine. Residue Ser-122 is modified to Phosphoserine. At Lys-127 the chain carries N6-acetyllysine. A phosphoserine mark is found at Ser-130 and Ser-132. Residues Lys-137, Lys-149, and Lys-164 each participate in a glycyl lysine isopeptide (Lys-Gly) (interchain with G-Cter in SUMO2) cross-link. Residues 178 to 179 and 197 to 198 each bind S-adenosyl-L-methionine; these read TT and EF. N6-acetyllysine is present on residues Lys-211 and Lys-212. S-adenosyl-L-methionine is bound by residues 222–223 and 242–245; these read DA and DVAQ.

It belongs to the methyltransferase superfamily. Fibrillarin family. Component of box C/D small nucleolar ribonucleoprotein (snoRNP) particles that contain SNU13, FBL, NOP5 and NOP56, plus a guide RNA. It is associated with the U3, U8, U13, X and Y small nuclear RNAs. Component of several ribosomal and nucleolar protein complexes. Part of the small subunit (SSU) processome, composed of more than 70 proteins and the RNA chaperone small nucleolar RNA (snoRNA) U3. Interacts with PRMT5 and UTP20. Interacts with DDX5 and C1QBP. Interacts with NOL11. Interacts with PIH1D1. Interacts with RRP1B. Interacts with NOLC1. Interacts with SDE2. Interacts with NOP2 and NOP56. In terms of processing, by homology to other fibrillarins, some or all of the N-terminal domain arginines are modified to asymmetric dimethylarginine (DMA). Ubiquitinated. Ubiquitination leads to proteasomal degradation. Deubiquitinated by USP36. Post-translationally, acetylated by CREBBP/CBP, preventing methylation of 'Gln-105' of histone H2A (H2AQ104me), without affecting rRNA methylation. Deacetylation by SIRT7 restores methylation of 'Gln-105' of histone H2A (H2AQ104me).

It is found in the nucleus. The protein resides in the nucleolus. Its subcellular location is the nucleoplasm. It catalyses the reaction L-glutaminyl-[histone H2A] + S-adenosyl-L-methionine = N(5)-methyl-L-glutaminyl-[histone H2A] + S-adenosyl-L-homocysteine + H(+). The enzyme catalyses a ribonucleotide in rRNA + S-adenosyl-L-methionine = a 2'-O-methylribonucleotide in rRNA + S-adenosyl-L-homocysteine + H(+). It carries out the reaction a ribonucleotide in U6 snRNA + S-adenosyl-L-methionine = a 2'-O-methylribonucleotide in U6 snRNA + S-adenosyl-L-homocysteine + H(+). In terms of biological role, S-adenosyl-L-methionine-dependent methyltransferase that has the ability to methylate both RNAs and proteins. Involved in pre-rRNA processing by catalyzing the site-specific 2'-hydroxyl methylation of ribose moieties in pre-ribosomal RNA. Site specificity is provided by a guide RNA that base pairs with the substrate. Methylation occurs at a characteristic distance from the sequence involved in base pairing with the guide RNA. Probably catalyzes 2'-O-methylation of U6 snRNAs in box C/D RNP complexes. U6 snRNA 2'-O-methylation is required for mRNA splicing fidelity. Also acts as a protein methyltransferase by mediating methylation of 'Gln-105' of histone H2A (H2AQ104me), a modification that impairs binding of the FACT complex and is specifically present at 35S ribosomal DNA locus. Part of the small subunit (SSU) processome, first precursor of the small eukaryotic ribosomal subunit. During the assembly of the SSU processome in the nucleolus, many ribosome biogenesis factors, an RNA chaperone and ribosomal proteins associate with the nascent pre-rRNA and work in concert to generate RNA folding, modifications, rearrangements and cleavage as well as targeted degradation of pre-ribosomal RNA by the RNA exosome. The polypeptide is rRNA 2'-O-methyltransferase fibrillarin (Mus musculus (Mouse)).